The chain runs to 107 residues: uncharacterized protein (107 aa).

It belongs to the HesB/IscA family.

This is an uncharacterized protein from Azotobacter vinelandii.